The following is a 220-amino-acid chain: Large ribosomal subunit protein bL25 (220 aa).

Residues 186–199 are compositionally biased toward acidic residues; sequence ELEDEDEDEDEVAA. A disordered region spans residues 186 to 220; sequence ELEDEDEDEDEVAADEVPATEVDDQAAVKEGEGKE. The span at 211–220 shows a compositional bias: basic and acidic residues; the sequence is AAVKEGEGKE.

Belongs to the bacterial ribosomal protein bL25 family. CTC subfamily. As to quaternary structure, part of the 50S ribosomal subunit; part of the 5S rRNA/L5/L18/L25 subcomplex. Contacts the 5S rRNA. Binds to the 5S rRNA independently of L5 and L18.

Its function is as follows. This is one of the proteins that binds to the 5S RNA in the ribosome where it forms part of the central protuberance. This Christiangramia forsetii (strain DSM 17595 / CGMCC 1.15422 / KT0803) (Gramella forsetii) protein is Large ribosomal subunit protein bL25.